Consider the following 95-residue polypeptide: Glycophorin-C (95 aa).

The Extracellular portion of the chain corresponds to 1–25; that stretch reads MSSPVRTPPPERLEPNPGMSYAVME. A helical; Signal-anchor for type III membrane protein membrane pass occupies residues 26–46; that stretch reads IAIIAAVITAVALVLVCLLFL. At 47 to 95 the chain is on the cytoplasmic side; that stretch reads MLRYLYRHKGTYYTNEAKGTEFAESADAALQSDPALQDAGDTSKKEYFI. Residues Ser71, Ser78, and Ser89 each carry the phosphoserine modification.

It belongs to the glycophorin-C family.

Its subcellular location is the cell membrane. This chain is Glycophorin-C (Gypc), found in Rattus norvegicus (Rat).